A 441-amino-acid polypeptide reads, in one-letter code: tRNA-2-methylthio-N(6)-dimethylallyladenosine synthase (441 aa).

Residues 5 to 121 (KKLYLETFGC…LQGMVAAAEE (117 aa)) enclose the MTTase N-terminal domain. [4Fe-4S] cluster contacts are provided by Cys14, Cys50, Cys84, Cys159, Cys163, and Cys166. A Radical SAM core domain is found at 145–375 (AEGGVTRFVT…QAAQKKTTLA (231 aa)). The TRAM domain occupies 378–440 (RSLEGTVQKV…QTLLKGEIVH (63 aa)).

This sequence belongs to the methylthiotransferase family. MiaB subfamily. Monomer. Requires [4Fe-4S] cluster as cofactor.

The protein resides in the cytoplasm. The catalysed reaction is N(6)-dimethylallyladenosine(37) in tRNA + (sulfur carrier)-SH + AH2 + 2 S-adenosyl-L-methionine = 2-methylsulfanyl-N(6)-dimethylallyladenosine(37) in tRNA + (sulfur carrier)-H + 5'-deoxyadenosine + L-methionine + A + S-adenosyl-L-homocysteine + 2 H(+). Catalyzes the methylthiolation of N6-(dimethylallyl)adenosine (i(6)A), leading to the formation of 2-methylthio-N6-(dimethylallyl)adenosine (ms(2)i(6)A) at position 37 in tRNAs that read codons beginning with uridine. The chain is tRNA-2-methylthio-N(6)-dimethylallyladenosine synthase from Citrifermentans bemidjiense (strain ATCC BAA-1014 / DSM 16622 / JCM 12645 / Bem) (Geobacter bemidjiensis).